Reading from the N-terminus, the 316-residue chain is L-lactate dehydrogenase 3 (316 aa).

4 residues coordinate NAD(+): Val-16, Asp-37, Arg-42, and Tyr-68. Arg-91 serves as a coordination point for substrate. NAD(+) is bound by residues Ser-104, 121 to 123 (ASN), and Thr-146. Residue 123–126 (NPVD) participates in substrate binding. Residue 151 to 154 (DSSR) participates in substrate binding. Positions 156 and 171 each coordinate beta-D-fructose 1,6-bisphosphate. The Proton acceptor role is filled by His-178. Thr-233 contributes to the substrate binding site.

It belongs to the LDH/MDH superfamily. LDH family. As to quaternary structure, homotetramer.

Its subcellular location is the cytoplasm. It catalyses the reaction (S)-lactate + NAD(+) = pyruvate + NADH + H(+). The protein operates within fermentation; pyruvate fermentation to lactate; (S)-lactate from pyruvate: step 1/1. Allosterically activated by fructose 1,6-bisphosphate (FBP). In terms of biological role, catalyzes the conversion of lactate to pyruvate. This chain is L-lactate dehydrogenase 3, found in Bacillus cereus (strain ATCC 10987 / NRS 248).